The primary structure comprises 426 residues: Phosphomethylpyrimidine synthase (426 aa).

Substrate contacts are provided by residues N65, M94, Y123, H162, 184-186 (SRG), 225-228 (DGMR), and E264. H268 contacts Zn(2+). Y291 provides a ligand contact to substrate. H332 contributes to the Zn(2+) binding site. 3 residues coordinate [4Fe-4S] cluster: C408, C411, and C415.

Belongs to the ThiC family. The cofactor is [4Fe-4S] cluster.

It carries out the reaction 5-amino-1-(5-phospho-beta-D-ribosyl)imidazole + S-adenosyl-L-methionine = 4-amino-2-methyl-5-(phosphooxymethyl)pyrimidine + CO + 5'-deoxyadenosine + formate + L-methionine + 3 H(+). It participates in cofactor biosynthesis; thiamine diphosphate biosynthesis. Its function is as follows. Catalyzes the synthesis of the hydroxymethylpyrimidine phosphate (HMP-P) moiety of thiamine from aminoimidazole ribotide (AIR) in a radical S-adenosyl-L-methionine (SAM)-dependent reaction. The protein is Phosphomethylpyrimidine synthase of Methanococcus aeolicus (strain ATCC BAA-1280 / DSM 17508 / OCM 812 / Nankai-3).